The following is a 253-amino-acid chain: MITNTAAYQFVTIQHPQTLAASVLAQAEQQALKGSVLIAEEGINLFLAGDAEQIGAFYAWLQADARFARMRIKYSESAYQPFARLKVKIKPEIISFRRDDASPLQGRAPSVTPAVLREWLRNGQDDRGRPLVLLDTRNAQEVVYGTFQGALTLPIDTFTELPGALESHRAALADATVVSFCTGGIRCEKAALWMQADGMDNVLQLEGGILGYFEEVGGEGYDGRCFVFDERVALDPELKPLVDAERPAKTGKI.

Residues 127–221 (RGRPLVLLDT…YFEEVGGEGY (95 aa)) form the Rhodanese domain. The Cysteine persulfide intermediate role is filled by Cys-181.

This sequence belongs to the TrhO family.

It catalyses the reaction uridine(34) in tRNA + AH2 + O2 = 5-hydroxyuridine(34) in tRNA + A + H2O. Catalyzes oxygen-dependent 5-hydroxyuridine (ho5U) modification at position 34 in tRNAs. In Xanthomonas oryzae pv. oryzae (strain MAFF 311018), this protein is tRNA uridine(34) hydroxylase.